The following is a 192-amino-acid chain: Peptidyl-tRNA hydrolase (192 aa).

Residue Y16 participates in tRNA binding. Catalysis depends on H21, which acts as the Proton acceptor. The tRNA site is built by Y66 and N68.

It belongs to the PTH family. In terms of assembly, monomer.

The protein localises to the cytoplasm. It carries out the reaction an N-acyl-L-alpha-aminoacyl-tRNA + H2O = an N-acyl-L-amino acid + a tRNA + H(+). Its function is as follows. Hydrolyzes ribosome-free peptidyl-tRNAs (with 1 or more amino acids incorporated), which drop off the ribosome during protein synthesis, or as a result of ribosome stalling. In terms of biological role, catalyzes the release of premature peptidyl moieties from peptidyl-tRNA molecules trapped in stalled 50S ribosomal subunits, and thus maintains levels of free tRNAs and 50S ribosomes. This chain is Peptidyl-tRNA hydrolase, found in Aquifex aeolicus (strain VF5).